Consider the following 377-residue polypeptide: Proteinase-activated receptor 3 (377 aa).

Residues 1-19 form the signal peptide; it reads MRAAIFAAIGALLLSPASC. Positions 20 to 38 are cleaved as a propeptide — removed for receptor activation; that stretch reads QSGMEYDADNLAKPTLSIK. The Extracellular segment spans residues 39–94; it reads TFRGAPQNSFEEFPLSAIEGWTGTTKTVKIKCPEELDSNLHVNNATMGYLSSPLST. The N-linked (GlcNAc...) asparagine glycan is linked to Asn-82. The chain crosses the membrane as a helical span at residues 95-120; that stretch reads KLIPAIYILVFAVGMPANAVTLWMLF. Topologically, residues 121-127 are cytoplasmic; that stretch reads RTRTIRM. Residues 128–147 form a helical membrane-spanning segment; sequence TIFYTNLAIADFLFCVTLPF. Topologically, residues 148–166 are extracellular; the sequence is RIAYHLNGNNWVFGEVMCR. The cysteines at positions 165 and 244 are disulfide-linked. The chain crosses the membrane as a helical span at residues 167-188; that stretch reads ATTVIFYGNMYCSILLLACISI. The Cytoplasmic segment spans residues 189-205; sequence NRYLAIVHPFTYRGLPK. The helical transmembrane segment at 206–229 threads the bilayer; sequence RTYALLTCGLVWTTVFLYMLPFFI. The Extracellular portion of the chain corresponds to 230-259; it reads LKQEYYLVQQDITTCHDVHNTCESSSPFQL. The chain crosses the membrane as a helical span at residues 260-279; that stretch reads YYFISLAFFGFLIPFLVIIY. Residues 280–296 are Cytoplasmic-facing; the sequence is CYTAIIWTLNAKDRRWL. Residues 297 to 321 traverse the membrane as a helical segment; the sequence is WYIKASLLTFVIFTICFAPSNIILI. Residues 322–335 are Extracellular-facing; the sequence is IHHANYYYSNTDAL. Residues 336 to 360 form a helical membrane-spanning segment; the sequence is YFVYLIALCLGSLNSCLDPFLYFLM. Residues 361–377 are Cytoplasmic-facing; sequence SKITDHSTAYLTMVKLS.

This sequence belongs to the G-protein coupled receptor 1 family. In terms of assembly, interacts with INSC/inscuteable and GPSM2. A proteolytic cleavage generates a new N-terminus that functions as a tethered ligand.

It is found in the cell membrane. In terms of biological role, receptor for activated thrombin coupled to G proteins that stimulate phosphoinositide hydrolysis. The sequence is that of Proteinase-activated receptor 3 (F2RL2) from Bos taurus (Bovine).